Here is a 130-residue protein sequence, read N- to C-terminus: uncharacterized protein (130 aa).

The disordered stretch occupies residues Met-1–Pro-100. Basic and acidic residues-rich tracts occupy residues Tyr-57–Asp-75 and Ala-91–Pro-100.

This is an uncharacterized protein from Equine herpesvirus 1 (strain Ab4p) (EHV-1).